Consider the following 277-residue polypeptide: 2-dehydro-3-deoxyphosphooctonate aldolase (277 aa).

It belongs to the KdsA family.

Its subcellular location is the cytoplasm. The enzyme catalyses D-arabinose 5-phosphate + phosphoenolpyruvate + H2O = 3-deoxy-alpha-D-manno-2-octulosonate-8-phosphate + phosphate. It functions in the pathway carbohydrate biosynthesis; 3-deoxy-D-manno-octulosonate biosynthesis; 3-deoxy-D-manno-octulosonate from D-ribulose 5-phosphate: step 2/3. Its pathway is bacterial outer membrane biogenesis; lipopolysaccharide biosynthesis. This Mesorhizobium japonicum (strain LMG 29417 / CECT 9101 / MAFF 303099) (Mesorhizobium loti (strain MAFF 303099)) protein is 2-dehydro-3-deoxyphosphooctonate aldolase (kdsA).